The following is a 141-amino-acid chain: uncharacterized protein (141 aa).

This is an uncharacterized protein from Arabidopsis thaliana (Mouse-ear cress).